Reading from the N-terminus, the 311-residue chain is Trem-like transcript 1 protein (311 aa).

A signal peptide spans 1-15; that stretch reads MGLTLLLLLLLGLEG. The region spanning 16–121 is the Ig-like V-type domain; it reads QGIVGSLPEV…PQILHRVSLN (106 aa). At 16–162 the chain is on the extracellular side; it reads QGIVGSLPEV…EPSQDEKSIP (147 aa). Disulfide bonds link Cys-38/Cys-104 and Cys-52/Cys-59. The chain crosses the membrane as a helical span at residues 163–183; sequence LIWGAVLLVGLLVAAVVLFAV. Residues 184–311 are Cytoplasmic-facing; it reads MAKRKQGNRL…NPPNNQTPSS (128 aa). Cys-196 is lipidated: S-palmitoyl cysteine. The disordered stretch occupies residues 229–263; sequence VPHIRLDSPPSFDNTTYTSLPLDSPSGKPSLPAPS. A compositionally biased stretch (polar residues) spans 239–249; sequence SFDNTTYTSLP. The ITIM signature appears at 279–284; the sequence is VTYATV. The interval 287-311 is disordered; the sequence is PGGNKGGGTSCGPAQNPPNNQTPSS.

In terms of assembly, when phosphorylated, interacts with PTPN6. When phosphorylated, interacts with PTPN11. Phosphorylated on tyrosine residues. In terms of tissue distribution, detected in platelets, monocytic leukemia and in T-cell leukemia.

The protein resides in the cell membrane. The protein localises to the cytoplasm. In terms of biological role, cell surface receptor that may play a role in the innate and adaptive immune response. The sequence is that of Trem-like transcript 1 protein (TREML1) from Homo sapiens (Human).